A 552-amino-acid polypeptide reads, in one-letter code: Cation/acetate symporter ActP (552 aa).

14 consecutive transmembrane segments (helical) span residues 5 to 25, 35 to 55, 78 to 98, 105 to 125, 151 to 171, 185 to 205, 208 to 228, 264 to 284, 305 to 325, 357 to 377, 407 to 427, 431 to 451, 466 to 486, and 499 to 519; these read FMML…DALT, IQAI…TYWA, GLAI…SALV, GLIY…LIAE, LSAC…MVGA, VAVI…GMLA, WVQI…AVMV, ISAL…PHIL, GFMG…ILLV, FFLG…VAGL, VSKI…ILFE, IAFM…PIII, IGGW…PTIW, and YDYP…FFSI.

The protein belongs to the sodium:solute symporter (SSF) (TC 2.A.21) family.

The protein localises to the cell inner membrane. Functionally, transports acetate. The protein is Cation/acetate symporter ActP of Pectobacterium carotovorum subsp. carotovorum (strain PC1).